The primary structure comprises 566 residues: 4-hydroxy-7-methoxy-3-oxo-3,4-dihydro-2H-1,4-benzoxazin-2-yl glucoside beta-D-glucosidase 1, chloroplastic (566 aa).

The N-terminal 54 residues, 1–54 (MAPLLAAAMNHAAAHPGLRSHLVGPNNESFSRHHLPSSSPQSSKRRCNLSFTTR), are a transit peptide targeting the chloroplast. Positions 17-47 (GLRSHLVGPNNESFSRHHLPSSSPQSSKRRC) are disordered. Residues Gln92, His196, and 244–245 (NE) contribute to the a beta-D-glucoside site. The active-site Proton donor is the Glu245. Cys264 and Cys270 are oxidised to a cystine. The tract at residues 325–361 (SFLDKQAEERSWDINLGWFLEPVVRGDYPFSMRSLAR) is dimerization. Tyr387 contacts a beta-D-glucoside. 2 dimerization regions span residues 394 to 405 (NIDISPNYSPVL) and 450 to 453 (KYGN). Residues Glu460, Trp511, 518–519 (EW), and Tyr527 contribute to the a beta-D-glucoside site. Glu460 acts as the Nucleophile in catalysis.

It belongs to the glycosyl hydrolase 1 family. In terms of assembly, homo- and heterodimer. Expressed in all seedling parts. Most abundant in the coleoptile.

The protein localises to the plastid. The protein resides in the chloroplast. The enzyme catalyses Hydrolysis of terminal, non-reducing beta-D-glucosyl residues with release of beta-D-glucose.. It catalyses the reaction DIMBOA beta-D-glucoside + H2O = DIMBOA + D-glucose. The catalysed reaction is DIBOA beta-D-glucoside + H2O = DIBOA + D-glucose. With respect to regulation, reversibly inhibited by micromolar concentrations of Hg(2+) or Ag(+), but irreversibly inhibited by alkylation in presence of urea. Competitive inhibition by p-nitrophenyl beta-D-thioglucoside (pNPTGlc), glucotetrazole, and para-hydroxy-S-mandelonitrile beta-glucoside (dhurrin). Is implicated in many functions such as ABA metabolism, hydrolysis of conjugated gibberellins, conversion of storage forms of cytokinins to active forms. Also acts in defense of young plant parts against pests via the production of hydroxamic acids from hydroxamic acid glucosides. Enzymatic activity is highly correlated with plant growth. The preferred substrate is DIMBOA-beta-D-glucoside. Hydrolyzes the chromogenic substrate 6-bromo-2-naphthyl-beta-D-glucoside (6BNGlc) and various artificial aryl beta-glucosides. No activity with cellobiose, arbutin, gentiobiose, linamarin or dhurrin as substrates. The polypeptide is 4-hydroxy-7-methoxy-3-oxo-3,4-dihydro-2H-1,4-benzoxazin-2-yl glucoside beta-D-glucosidase 1, chloroplastic (GLU1) (Zea mays (Maize)).